We begin with the raw amino-acid sequence, 434 residues long: Adenylosuccinate synthetase (434 aa).

GTP contacts are provided by residues 22-28 and 50-52; these read GDEGKGK and GHT. Aspartate 23 functions as the Proton acceptor in the catalytic mechanism. Mg(2+) is bound by residues aspartate 23 and glycine 50. IMP is bound by residues 23–26, 48–51, threonine 139, arginine 153, glutamine 234, threonine 249, and arginine 313; these read DEGK and NAGH. Histidine 51 (proton donor) is an active-site residue. 309–315 is a substrate binding site; sequence ATTGRKR. Residues arginine 315, 341-343, and 423-425 each bind GTP; these read KLD and SVG.

Belongs to the adenylosuccinate synthetase family. As to quaternary structure, homodimer. Requires Mg(2+) as cofactor.

Its subcellular location is the cytoplasm. It carries out the reaction IMP + L-aspartate + GTP = N(6)-(1,2-dicarboxyethyl)-AMP + GDP + phosphate + 2 H(+). It participates in purine metabolism; AMP biosynthesis via de novo pathway; AMP from IMP: step 1/2. Functionally, plays an important role in the de novo pathway of purine nucleotide biosynthesis. Catalyzes the first committed step in the biosynthesis of AMP from IMP. In Pelodictyon phaeoclathratiforme (strain DSM 5477 / BU-1), this protein is Adenylosuccinate synthetase.